Consider the following 1004-residue polypeptide: 2-oxoglutarate dehydrogenase E1 component (1004 aa).

The protein belongs to the alpha-ketoglutarate dehydrogenase family. In terms of assembly, homodimer. Part of the 2-oxoglutarate dehydrogenase (OGDH) complex composed of E1 (2-oxoglutarate dehydrogenase), E2 (dihydrolipoamide succinyltransferase) and E3 (dihydrolipoamide dehydrogenase); the complex contains multiple copies of the three enzymatic components (E1, E2 and E3). Thiamine diphosphate serves as cofactor.

It carries out the reaction N(6)-[(R)-lipoyl]-L-lysyl-[protein] + 2-oxoglutarate + H(+) = N(6)-[(R)-S(8)-succinyldihydrolipoyl]-L-lysyl-[protein] + CO2. In terms of biological role, E1 component of the 2-oxoglutarate dehydrogenase (OGDH) complex which catalyzes the decarboxylation of 2-oxoglutarate, the first step in the conversion of 2-oxoglutarate to succinyl-CoA and CO(2). The protein is 2-oxoglutarate dehydrogenase E1 component of Brucella suis (strain ATCC 23445 / NCTC 10510).